The following is a 158-amino-acid chain: 6,7-dimethyl-8-ribityllumazine synthase (158 aa).

5-amino-6-(D-ribitylamino)uracil-binding positions include phenylalanine 22, 57–59 (AFE), and 81–83 (AVI). (2S)-2-hydroxy-3-oxobutyl phosphate is bound at residue 86–87 (GT). Catalysis depends on histidine 89, which acts as the Proton donor. Phenylalanine 114 is a 5-amino-6-(D-ribitylamino)uracil binding site. Arginine 128 is a (2S)-2-hydroxy-3-oxobutyl phosphate binding site.

This sequence belongs to the DMRL synthase family. Forms an icosahedral capsid composed of 60 subunits, arranged as a dodecamer of pentamers.

It carries out the reaction (2S)-2-hydroxy-3-oxobutyl phosphate + 5-amino-6-(D-ribitylamino)uracil = 6,7-dimethyl-8-(1-D-ribityl)lumazine + phosphate + 2 H2O + H(+). The protein operates within cofactor biosynthesis; riboflavin biosynthesis; riboflavin from 2-hydroxy-3-oxobutyl phosphate and 5-amino-6-(D-ribitylamino)uracil: step 1/2. Functionally, catalyzes the formation of 6,7-dimethyl-8-ribityllumazine by condensation of 5-amino-6-(D-ribitylamino)uracil with 3,4-dihydroxy-2-butanone 4-phosphate. This is the penultimate step in the biosynthesis of riboflavin. This Shewanella amazonensis (strain ATCC BAA-1098 / SB2B) protein is 6,7-dimethyl-8-ribityllumazine synthase.